The chain runs to 130 residues: Single-stranded DNA-binding protein 1 (130 aa).

The SSB domain occupies 1-104; that stretch reads MINNVVLIGR…VVAESFQILE (104 aa). The disordered stretch occupies residues 108–130; the sequence is NTANTSSLADSMPDYGPEPDLPF.

As to quaternary structure, homotetramer.

This chain is Single-stranded DNA-binding protein 1 (ssb1), found in Streptococcus pyogenes serotype M18 (strain MGAS8232).